The chain runs to 375 residues: Growth/differentiation factor 8 (375 aa).

A signal peptide spans 1 to 23 (MQKLQLCVYIYLFMLIVAGPVDL). The propeptide occupies 24–266 (NENSEQKENV…VTDTPKRSRR (243 aa)). Asparagine 71 is a glycosylation site (N-linked (GlcNAc...) asparagine). Intrachain disulfides connect cysteine 272-cysteine 282, cysteine 281-cysteine 340, cysteine 309-cysteine 372, and cysteine 313-cysteine 374.

The protein belongs to the TGF-beta family. Homodimer; disulfide-linked. Interacts with WFIKKN2, leading to inhibit its activity. Interacts with FST3. In terms of processing, synthesized as large precursor molecule that undergoes proteolytic cleavage to generate an N-terminal propeptide and a disulfide linked C-terminal dimer, which is the biologically active molecule. The circulating form consists of a latent complex of the C-terminal dimer and other proteins, including its propeptide, which maintain the C-terminal dimer in a latent, inactive state. Ligand activation requires additional cleavage of the prodomain by a tolloid-like metalloproteinase.

It is found in the secreted. Its function is as follows. Acts specifically as a negative regulator of skeletal muscle growth. In Homo sapiens (Human), this protein is Growth/differentiation factor 8 (MSTN).